The following is a 212-amino-acid chain: Large ribosomal subunit protein uL3 (212 aa).

Residues 134–154 are disordered; that stretch reads RKTHGNSVSHRVPGSIGQNQT. Gln153 carries the post-translational modification N5-methylglutamine.

It belongs to the universal ribosomal protein uL3 family. In terms of assembly, part of the 50S ribosomal subunit. Forms a cluster with proteins L14 and L19. Methylated by PrmB.

Its function is as follows. One of the primary rRNA binding proteins, it binds directly near the 3'-end of the 23S rRNA, where it nucleates assembly of the 50S subunit. The polypeptide is Large ribosomal subunit protein uL3 (Dichelobacter nodosus (strain VCS1703A)).